The sequence spans 378 residues: Erythronate-4-phosphate dehydrogenase (378 aa).

Substrate-binding residues include Ser45 and Thr66. Asp146 and Thr175 together coordinate NAD(+). Arg208 is a catalytic residue. Asp232 contributes to the NAD(+) binding site. Glu237 is an active-site residue. Residue His254 is the Proton donor of the active site. Gly257 serves as a coordination point for NAD(+). Residue Tyr258 coordinates substrate.

This sequence belongs to the D-isomer specific 2-hydroxyacid dehydrogenase family. PdxB subfamily. As to quaternary structure, homodimer.

It localises to the cytoplasm. It catalyses the reaction 4-phospho-D-erythronate + NAD(+) = (R)-3-hydroxy-2-oxo-4-phosphooxybutanoate + NADH + H(+). Its pathway is cofactor biosynthesis; pyridoxine 5'-phosphate biosynthesis; pyridoxine 5'-phosphate from D-erythrose 4-phosphate: step 2/5. Catalyzes the oxidation of erythronate-4-phosphate to 3-hydroxy-2-oxo-4-phosphonooxybutanoate. The chain is Erythronate-4-phosphate dehydrogenase from Citrobacter koseri (strain ATCC BAA-895 / CDC 4225-83 / SGSC4696).